We begin with the raw amino-acid sequence, 352 residues long: Heat-inducible transcription repressor HrcA (352 aa).

The protein belongs to the HrcA family.

Functionally, negative regulator of class I heat shock genes (grpE-dnaK-dnaJ and groELS operons). Prevents heat-shock induction of these operons. This is Heat-inducible transcription repressor HrcA from Prochlorococcus marinus (strain MIT 9313).